A 379-amino-acid chain; its full sequence is AT-rich binding protein (379 aa).

Residues 29 to 52 form a C2H2-type 1 zinc finger; it reads IVCHTCQEELQTQDQFWKHIQDEH. Positions 114–124 are enriched in basic and acidic residues; sequence EQREVELHEAH. 2 disordered regions span residues 114-148 and 221-267; these read EQRE…DAAK and PTAS…STTL. Composition is skewed to low complexity over residues 125-143, 223-242, and 249-262; these read QQQQ…QQQQ and ASFV…TTPP. C2H2-type zinc fingers lie at residues 312 to 336 and 342 to 365; these read YICD…RVVH and FNCD…KKKH.

It localises to the nucleus. In terms of biological role, may be a transcription factor for genes having (A+T) stretches in their promoter and/or enhancer regions. Binds to AT rich DNA. This is AT-rich binding protein from Drosophila willistoni (Fruit fly).